Here is a 90-residue protein sequence, read N- to C-terminus: UPF0237 protein MJ1558 (90 aa).

The ACT domain occupies valine 5–glutamine 79.

This sequence belongs to the UPF0237 family.

This is UPF0237 protein MJ1558 from Methanocaldococcus jannaschii (strain ATCC 43067 / DSM 2661 / JAL-1 / JCM 10045 / NBRC 100440) (Methanococcus jannaschii).